A 102-amino-acid chain; its full sequence is Large ribosomal subunit protein bL21 (102 aa).

Belongs to the bacterial ribosomal protein bL21 family. Part of the 50S ribosomal subunit. Contacts protein L20.

This protein binds to 23S rRNA in the presence of protein L20. In Bacillus pumilus (strain SAFR-032), this protein is Large ribosomal subunit protein bL21.